The following is a 435-amino-acid chain: Nucleoredoxin (435 aa).

S2 bears the N-acetylserine mark. One can recognise a Thioredoxin domain in the interval 167–314; it reads PKPFREVIAG…FPWHPKPVLE (148 aa).

Belongs to the nucleoredoxin family. Associates with the phosphatase 2A holoenzyme. Interacts with PPP2CA; the interaction is direct. Interacts with DVL1 (via PDZ domain); the interaction is direct and regulated by oxidative stress. In terms of tissue distribution, widely expressed with higher expression in testis and skin.

It localises to the cytoplasm. The protein resides in the cytosol. It is found in the nucleus. It catalyses the reaction [protein]-dithiol + NAD(+) = [protein]-disulfide + NADH + H(+). It carries out the reaction [protein]-dithiol + NADP(+) = [protein]-disulfide + NADPH + H(+). Functions as a redox-dependent negative regulator of the Wnt signaling pathway, possibly by preventing ubiquitination of DVL3 by the BCR(KLHL12) complex. May also function as a transcriptional regulator act as a regulator of protein phosphatase 2A (PP2A). The chain is Nucleoredoxin (Nxn) from Mus musculus (Mouse).